The sequence spans 456 residues: Proline-specific permease ProY (456 aa).

Over 1–17 the chain is Cytoplasmic; it reads MESNNKLKRGLSTRHIR. Helical transmembrane passes span 18-38 and 39-59; these read FMAL…DAIK and MAGP…YIIM. Residues 60 to 95 lie on the Cytoplasmic side of the membrane; the sequence is RALGEMSVHNPAASSFSRYAQENLGPLAGYITGWTY. Transmembrane regions (helical) follow at residues 96 to 116 and 117 to 137; these read CFEI…YMGV and WFPA…ICAI. Topologically, residues 138-156 are cytoplasmic; the sequence is NLMSVKVFGELEFWFSFFK. A helical membrane pass occupies residues 157-177; that stretch reads VATIIIMIVAGIGIIVWGIGN. The Periplasmic portion of the chain corresponds to 178-197; sequence GGQPTGIHNLWSNGGFFSNG. A helical transmembrane segment spans residues 198-218; that stretch reads WLGMIMSLQMVMFAYGGIEII. The Cytoplasmic segment spans residues 219 to 242; sequence GITAGEAKDPEKSIPRAINSVPMR. Residues 243–263 form a helical membrane-spanning segment; sequence ILVFYVGTLFVIMSIYPWNQV. The Periplasmic segment spans residues 264-277; that stretch reads GTNGSPFVLTFQHM. Residues 278–298 traverse the membrane as a helical segment; sequence GITFAASILNFVVLTASLSAI. The Cytoplasmic portion of the chain corresponds to 299–331; sequence NSDVFGVGRMLHGMAEQGSAPKVFAKTSRRGIP. A helical transmembrane segment spans residues 332 to 352; sequence WVTVLVMTIALLFAVYLNYIM. Residues 353-355 lie on the Periplasmic side of the membrane; that stretch reads PEN. Residues 356-376 traverse the membrane as a helical segment; it reads VFLVIASLATFATVWVWIMIL. At 377-399 the chain is on the cytoplasmic side; it reads LSQIAFRRRLPPEEVKALKFKVP. A helical membrane pass occupies residues 400–420; it reads GGVVTTIAGLIFLVFIIALIG. Over 421-424 the chain is Periplasmic; that stretch reads YHPD. Residues 425-445 traverse the membrane as a helical segment; the sequence is TRISLYVGFAWIVLLLIGWIF. At 446–456 the chain is on the cytoplasmic side; it reads KRRRDRQLAQA.

It belongs to the amino acid-polyamine-organocation (APC) superfamily. Amino acid transporter (AAT) (TC 2.A.3.1) family.

Its subcellular location is the cell inner membrane. Permease that is involved in the transport across the cytoplasmic membrane of proline. This chain is Proline-specific permease ProY (proY), found in Salmonella typhimurium (strain LT2 / SGSC1412 / ATCC 700720).